The sequence spans 490 residues: MDKVTDNSPDVESTESTEGSFPTVGVDTGDTITATLATGTENVGGGGGAFGGASESSAAIHATAKWSTAQLKKHQAEQAARAAAAEAALAKAKSQRDALTQRLKDIVNDALRANAARSPSVTDLAHANNMAMQAEAERLRLAKAEQKAREEAEAAEKALREAERQRDEIARQQAETAHLLAMAEAAEAEKNRQDSLDEEHRAVEVAEKKLAEAKAELAKAESDVQSKQAIVSRVAGELENAQKSVDVKVTGFPGWRDVQKKLERQLQDKKNEYSSVTNALNSAVSIRDAKKTEVQNAEIKLKEAKDALEKSQVKDSVDTMVGFYQYITEQYGEKYSRIAQDLAEKAKGSKFNSVDEALAAFEKYKNVLDKKFSKVDRDDIFNALESITYDEWAKHLEKISRALKVTGYLSFGYDVWDGTLKGLKTGDWKPLFVTLEKSAVDFGVAKIVALMFSFIVGAPLGFWGIAIITGIVSSYIGDDELNKLNELLGI.

Positions 1–20 (MDKVTDNSPDVESTESTEGS) are enriched in polar residues. Disordered stretches follow at residues 1-29 (MDKV…VDTG) and 146-171 (QKAR…EIAR). Basic and acidic residues predominate over residues 146–170 (QKAREEAEAAEKALREAERQRDEIA). The chain crosses the membrane as a helical span at residues 447–467 (IVALMFSFIVGAPLGFWGIAI).

It belongs to the channel forming colicin family.

The protein resides in the host membrane. Its function is as follows. This colicin is a channel-forming colicin. This class of transmembrane toxins depolarize the cytoplasmic membrane, leading to dissipation of cellular energy. Functionally, colicins are polypeptide toxins produced by and active against E.coli and closely related bacteria. The sequence is that of Colicin-10 (cta) from Escherichia coli.